The primary structure comprises 156 residues: Snaclec alboaggregin-B subunit alpha (156 aa).

A signal peptide spans 1–23; that stretch reads MGRFIFVSFGLLVVFLSLSGTGA. One can recognise a C-type lectin domain in the interval 24–151; that stretch reads DCPSDWSSFK…CEQKHIFMCK (128 aa). 3 disulfides stabilise this stretch: Cys25/Cys36, Cys53/Cys150, and Cys125/Cys142.

This sequence belongs to the snaclec family. As to quaternary structure, heterodimer of subunits alpha and beta; disulfide-linked. Expressed by the venom gland.

It is found in the secreted. In terms of biological role, weakly agglutinates platelets at high doses by binding to GPIbalpha (GP1BA). The polypeptide is Snaclec alboaggregin-B subunit alpha (Trimeresurus albolabris (White-lipped pit viper)).